The primary structure comprises 383 residues: S-adenosylmethionine synthase (383 aa).

His15 lines the ATP pocket. Mg(2+) is bound at residue Asp17. A K(+)-binding site is contributed by Glu43. Positions 56 and 99 each coordinate L-methionine. The segment at 99 to 109 (QSPDINQGVDR) is flexible loop. ATP-binding positions include 164-166 (DAK), 230-231 (RF), Asp239, 245-246 (RK), Ala262, and Lys266. Position 239 (Asp239) interacts with L-methionine. Lys270 provides a ligand contact to L-methionine.

This sequence belongs to the AdoMet synthase family. As to quaternary structure, homotetramer; dimer of dimers. The cofactor is Mg(2+). K(+) serves as cofactor.

The protein localises to the cytoplasm. The catalysed reaction is L-methionine + ATP + H2O = S-adenosyl-L-methionine + phosphate + diphosphate. Its pathway is amino-acid biosynthesis; S-adenosyl-L-methionine biosynthesis; S-adenosyl-L-methionine from L-methionine: step 1/1. In terms of biological role, catalyzes the formation of S-adenosylmethionine (AdoMet) from methionine and ATP. The overall synthetic reaction is composed of two sequential steps, AdoMet formation and the subsequent tripolyphosphate hydrolysis which occurs prior to release of AdoMet from the enzyme. This is S-adenosylmethionine synthase from Shewanella sp. (strain ANA-3).